A 609-amino-acid polypeptide reads, in one-letter code: Dihydroxy-acid dehydratase (609 aa).

Aspartate 82 lines the Mg(2+) pocket. Cysteine 123 contacts [2Fe-2S] cluster. Positions 124 and 125 each coordinate Mg(2+). An N6-carboxylysine modification is found at lysine 125. Cysteine 192 contacts [2Fe-2S] cluster. Glutamate 489 is a binding site for Mg(2+). Serine 515 acts as the Proton acceptor in catalysis.

This sequence belongs to the IlvD/Edd family. As to quaternary structure, homodimer. The cofactor is [2Fe-2S] cluster. Mg(2+) serves as cofactor.

The enzyme catalyses (2R)-2,3-dihydroxy-3-methylbutanoate = 3-methyl-2-oxobutanoate + H2O. It carries out the reaction (2R,3R)-2,3-dihydroxy-3-methylpentanoate = (S)-3-methyl-2-oxopentanoate + H2O. The protein operates within amino-acid biosynthesis; L-isoleucine biosynthesis; L-isoleucine from 2-oxobutanoate: step 3/4. Its pathway is amino-acid biosynthesis; L-valine biosynthesis; L-valine from pyruvate: step 3/4. Functionally, functions in the biosynthesis of branched-chain amino acids. Catalyzes the dehydration of (2R,3R)-2,3-dihydroxy-3-methylpentanoate (2,3-dihydroxy-3-methylvalerate) into 2-oxo-3-methylpentanoate (2-oxo-3-methylvalerate) and of (2R)-2,3-dihydroxy-3-methylbutanoate (2,3-dihydroxyisovalerate) into 2-oxo-3-methylbutanoate (2-oxoisovalerate), the penultimate precursor to L-isoleucine and L-valine, respectively. The chain is Dihydroxy-acid dehydratase from Azobacteroides pseudotrichonymphae genomovar. CFP2.